A 193-amino-acid chain; its full sequence is Mediator of RNA polymerase II transcription subunit 11 (193 aa).

Residues 31 to 68 (AREIMQDLGKEKQISKNKMDDNANSFKKLITQVENELS) adopt a coiled-coil conformation. The segment at 115 to 193 (IEPPTQEVDE…EEEEGEQMEN (79 aa)) is disordered. The span at 121 to 143 (EVDEDNEDEEDSGDADMLEETPE) shows a compositional bias: acidic residues. Over residues 150 to 175 (TTSSSATTSDGGSGGADDAASSSAPR) the composition is skewed to low complexity. Positions 184 to 193 (EEEEGEQMEN) are enriched in acidic residues.

The protein belongs to the Mediator complex subunit 11 family. As to quaternary structure, component of the Mediator complex.

Its subcellular location is the nucleus. Component of the Mediator complex, a coactivator involved in the regulated transcription of nearly all RNA polymerase II-dependent genes. Mediator functions as a bridge to convey information from gene-specific regulatory proteins to the basal RNA polymerase II transcription machinery. Mediator is recruited to promoters by direct interactions with regulatory proteins and serves as a scaffold for the assembly of a functional pre-initiation complex with RNA polymerase II and the general transcription factors. The polypeptide is Mediator of RNA polymerase II transcription subunit 11 (mdt-11) (Caenorhabditis briggsae).